A 206-amino-acid chain; its full sequence is Holliday junction branch migration complex subunit RuvA (206 aa).

The domain I stretch occupies residues Met1 to Ile63. A domain II region spans residues Asp64–Ala142. A flexible linker region spans residues Gly143 to Ile153. Residues Ala154–Lys206 form a domain III region.

The protein belongs to the RuvA family. In terms of assembly, homotetramer. Forms an RuvA(8)-RuvB(12)-Holliday junction (HJ) complex. HJ DNA is sandwiched between 2 RuvA tetramers; dsDNA enters through RuvA and exits via RuvB. An RuvB hexamer assembles on each DNA strand where it exits the tetramer. Each RuvB hexamer is contacted by two RuvA subunits (via domain III) on 2 adjacent RuvB subunits; this complex drives branch migration. In the full resolvosome a probable DNA-RuvA(4)-RuvB(12)-RuvC(2) complex forms which resolves the HJ.

The protein localises to the cytoplasm. In terms of biological role, the RuvA-RuvB-RuvC complex processes Holliday junction (HJ) DNA during genetic recombination and DNA repair, while the RuvA-RuvB complex plays an important role in the rescue of blocked DNA replication forks via replication fork reversal (RFR). RuvA specifically binds to HJ cruciform DNA, conferring on it an open structure. The RuvB hexamer acts as an ATP-dependent pump, pulling dsDNA into and through the RuvAB complex. HJ branch migration allows RuvC to scan DNA until it finds its consensus sequence, where it cleaves and resolves the cruciform DNA. In Corynebacterium glutamicum (strain R), this protein is Holliday junction branch migration complex subunit RuvA.